Consider the following 209-residue polypeptide: Ribose 1,5-bisphosphate phosphokinase PhnN (209 aa).

An ATP-binding site is contributed by Gly-27 to Asp-34.

This sequence belongs to the ribose 1,5-bisphosphokinase family.

It carries out the reaction alpha-D-ribose 1,5-bisphosphate + ATP = 5-phospho-alpha-D-ribose 1-diphosphate + ADP. It functions in the pathway metabolic intermediate biosynthesis; 5-phospho-alpha-D-ribose 1-diphosphate biosynthesis; 5-phospho-alpha-D-ribose 1-diphosphate from D-ribose 5-phosphate (route II): step 3/3. Catalyzes the phosphorylation of ribose 1,5-bisphosphate to 5-phospho-D-ribosyl alpha-1-diphosphate (PRPP). This Chelativorans sp. (strain BNC1) protein is Ribose 1,5-bisphosphate phosphokinase PhnN.